The chain runs to 419 residues: L-rhamnose isomerase (419 aa).

The Mn(2+) site is built by H262, D294, and D296.

The protein belongs to the rhamnose isomerase family. Homotetramer. Mn(2+) is required as a cofactor.

The protein resides in the cytoplasm. It carries out the reaction L-rhamnopyranose = L-rhamnulose. It participates in carbohydrate degradation; L-rhamnose degradation; glycerone phosphate from L-rhamnose: step 1/3. Functionally, catalyzes the interconversion of L-rhamnose and L-rhamnulose. The protein is L-rhamnose isomerase of Salmonella choleraesuis (strain SC-B67).